A 204-amino-acid chain; its full sequence is Putative 3-methyladenine DNA glycosylase (204 aa).

This sequence belongs to the DNA glycosylase MPG family.

The protein is Putative 3-methyladenine DNA glycosylase of Bacillus mycoides (strain KBAB4) (Bacillus weihenstephanensis).